The chain runs to 295 residues: MRRLEGSMVAIVTPMKDGAVDLRALRDLTEWQLAEGTDGIVPCGTTGEGVTLTPAERADVIRTVIETVRGRALVIAGAGSNATHEAIESVKLAKTLGADAALVVTPYYNKPTQEGLFRHYQAIWEATRFPVVAYNVPSRTSVDLLPETVARLAKAGAIAGIKEATANMDRQVQLVEKVGKDAIAYLSGDDFTVLPYIACGGHGVISVIANVAPRAMKELVVAARSGDLAGALAKQAAMAELNRMMFVETNPGPVKAAVALLGRSGGELRLPLAPVSEASLAKVRDAMVRFGLKLA.

T46 lines the pyruvate pocket. Y134 (proton donor/acceptor) is an active-site residue. K162 acts as the Schiff-base intermediate with substrate in catalysis. Residue I205 participates in pyruvate binding.

Belongs to the DapA family. Homotetramer; dimer of dimers.

The protein resides in the cytoplasm. The enzyme catalyses L-aspartate 4-semialdehyde + pyruvate = (2S,4S)-4-hydroxy-2,3,4,5-tetrahydrodipicolinate + H2O + H(+). It functions in the pathway amino-acid biosynthesis; L-lysine biosynthesis via DAP pathway; (S)-tetrahydrodipicolinate from L-aspartate: step 3/4. Its function is as follows. Catalyzes the condensation of (S)-aspartate-beta-semialdehyde [(S)-ASA] and pyruvate to 4-hydroxy-tetrahydrodipicolinate (HTPA). The sequence is that of 4-hydroxy-tetrahydrodipicolinate synthase from Anaeromyxobacter dehalogenans (strain 2CP-1 / ATCC BAA-258).